The sequence spans 130 residues: Large ribosomal subunit protein bL19 (130 aa).

This sequence belongs to the bacterial ribosomal protein bL19 family.

Its function is as follows. This protein is located at the 30S-50S ribosomal subunit interface and may play a role in the structure and function of the aminoacyl-tRNA binding site. The polypeptide is Large ribosomal subunit protein bL19 (Cupriavidus taiwanensis (strain DSM 17343 / BCRC 17206 / CCUG 44338 / CIP 107171 / LMG 19424 / R1) (Ralstonia taiwanensis (strain LMG 19424))).